The primary structure comprises 419 residues: UDP-arabinose 4-epimerase 1 (419 aa).

A disordered region spans residues 1–21 (MFSFGRARSQGRQNRSMSLGG). The Cytoplasmic segment spans residues 1–32 (MFSFGRARSQGRQNRSMSLGGLDYADPKKKNN). Residues 33–51 (YLGKILLTASLTALCIFML) traverse the membrane as a helical; Signal-anchor for type II membrane protein segment. Over 52–419 (KQSPTFNTPS…GLTTSSVSVY (368 aa)) the chain is Lumenal. 72-103 (HVLVTGGAGYIGSHAALRLLKESYRVTIVDNL) provides a ligand contact to NAD(+). The Proton acceptor role is filled by Tyr-220.

This sequence belongs to the NAD(P)-dependent epimerase/dehydratase family. It depends on NAD(+) as a cofactor. High expression in roots. Also found in leaves, stems, flowers, and siliques.

It is found in the golgi apparatus. Its subcellular location is the golgi stack membrane. The enzyme catalyses UDP-beta-L-arabinopyranose = UDP-alpha-D-xylose. The protein operates within nucleotide-sugar biosynthesis; UDP-L-arabinose biosynthesis; UDP-L-arabinose from UDP-alpha-D-xylose: step 1/1. Its pathway is cell wall biogenesis; cell wall polysaccharide biosynthesis. Acts as a UDP-D-xylose 4-epimerase but lacks both UDP-D-glucose and UDP-D-glucuronic acid 4-epimerase activities in vitro. The protein is UDP-arabinose 4-epimerase 1 of Arabidopsis thaliana (Mouse-ear cress).